The sequence spans 216 residues: Octanoyltransferase (216 aa).

The BPL/LPL catalytic domain maps to 24 to 212 (KFRKECILFL…NLCSFLEPIN (189 aa)). Residues 69–76 (RGGDFTAH), 140–142 (SIG), and 153–155 (GIA) each bind substrate. Catalysis depends on cysteine 171, which acts as the Acyl-thioester intermediate.

Belongs to the LipB family.

It is found in the cytoplasm. It catalyses the reaction octanoyl-[ACP] + L-lysyl-[protein] = N(6)-octanoyl-L-lysyl-[protein] + holo-[ACP] + H(+). It functions in the pathway protein modification; protein lipoylation via endogenous pathway; protein N(6)-(lipoyl)lysine from octanoyl-[acyl-carrier-protein]: step 1/2. Catalyzes the transfer of endogenously produced octanoic acid from octanoyl-acyl-carrier-protein onto the lipoyl domains of lipoate-dependent enzymes. Lipoyl-ACP can also act as a substrate although octanoyl-ACP is likely to be the physiological substrate. In Leptospira interrogans serogroup Icterohaemorrhagiae serovar copenhageni (strain Fiocruz L1-130), this protein is Octanoyltransferase.